Reading from the N-terminus, the 377-residue chain is D-alanine--D-alanine ligase (377 aa).

Residues 140–349 form the ATP-grasp domain; the sequence is KELLTVNNIR…NVELVDKLID (210 aa). 170–225 provides a ligand contact to ATP; sequence VKDLGDVVFVKAANQGSSVGVSRAKTADEFEAALTDSFQYDYKVLIEAAVKGPREL. The Mg(2+) site is built by Asp303, Glu316, and Asn318.

It belongs to the D-alanine--D-alanine ligase family. Mg(2+) is required as a cofactor. It depends on Mn(2+) as a cofactor.

It is found in the cytoplasm. The enzyme catalyses 2 D-alanine + ATP = D-alanyl-D-alanine + ADP + phosphate + H(+). The protein operates within cell wall biogenesis; peptidoglycan biosynthesis. Cell wall formation. The sequence is that of D-alanine--D-alanine ligase from Leuconostoc citreum (strain KM20).